Here is a 101-residue protein sequence, read N- to C-terminus: NADH-quinone oxidoreductase subunit K (101 aa).

The next 3 membrane-spanning stretches (helical) occupy residues 4 to 24 (LAHY…GIFL), 30 to 50 (IIIL…FVAF), and 61 to 81 (IFVF…LAIL).

Belongs to the complex I subunit 4L family. As to quaternary structure, NDH-1 is composed of 14 different subunits. Subunits NuoA, H, J, K, L, M, N constitute the membrane sector of the complex.

The protein resides in the cell inner membrane. The enzyme catalyses a quinone + NADH + 5 H(+)(in) = a quinol + NAD(+) + 4 H(+)(out). NDH-1 shuttles electrons from NADH, via FMN and iron-sulfur (Fe-S) centers, to quinones in the respiratory chain. The immediate electron acceptor for the enzyme in this species is believed to be ubiquinone. Couples the redox reaction to proton translocation (for every two electrons transferred, four hydrogen ions are translocated across the cytoplasmic membrane), and thus conserves the redox energy in a proton gradient. The chain is NADH-quinone oxidoreductase subunit K from Burkholderia cenocepacia (strain HI2424).